The following is a 242-amino-acid chain: Ribonuclease 3 (242 aa).

The 128-residue stretch at 12 to 139 folds into the RNase III domain; it reads ANELLEALGT…LIGATFLEHG (128 aa). E51 is a binding site for Mg(2+). D55 is a catalytic residue. Positions 125 and 128 each coordinate Mg(2+). Residue E128 is part of the active site. Residues 165-236 form the DRBM domain; the sequence is LDWKTSLTVK…AEAGWKSLDS (72 aa).

This sequence belongs to the ribonuclease III family. Homodimer. Requires Mg(2+) as cofactor.

It is found in the cytoplasm. The catalysed reaction is Endonucleolytic cleavage to 5'-phosphomonoester.. Its function is as follows. Digests double-stranded RNA. Involved in the processing of primary rRNA transcript to yield the immediate precursors to the large and small rRNAs (23S and 16S). Processes some mRNAs, and tRNAs when they are encoded in the rRNA operon. Processes pre-crRNA and tracrRNA of type II CRISPR loci if present in the organism. The chain is Ribonuclease 3 from Bifidobacterium longum (strain NCC 2705).